The sequence spans 211 residues: Methylthioribulose-1-phosphate dehydratase (211 aa).

Zn(2+) is bound by residues H97 and H99.

It belongs to the aldolase class II family. MtnB subfamily. As to quaternary structure, homotetramer. Zn(2+) serves as cofactor.

The catalysed reaction is 5-(methylsulfanyl)-D-ribulose 1-phosphate = 5-methylsulfanyl-2,3-dioxopentyl phosphate + H2O. The protein operates within amino-acid biosynthesis; L-methionine biosynthesis via salvage pathway; L-methionine from S-methyl-5-thio-alpha-D-ribose 1-phosphate: step 2/6. Catalyzes the dehydration of methylthioribulose-1-phosphate (MTRu-1-P) into 2,3-diketo-5-methylthiopentyl-1-phosphate (DK-MTP-1-P). In Geobacillus thermodenitrificans (strain NG80-2), this protein is Methylthioribulose-1-phosphate dehydratase.